The chain runs to 554 residues: Inactive sesquithujene synthase B (554 aa).

D308 and D312 together coordinate Mg(2+). Positions 308, 312, 449, and 452 each coordinate substrate. The DDXXD motif motif lies at D308–D312. Residues N452, S456, and E460 each contribute to the Mg(2+) site.

It belongs to the terpene synthase family. Monomer. It depends on Mg(2+) as a cofactor. Mn(2+) serves as cofactor.

It localises to the cytoplasm. Its pathway is secondary metabolite biosynthesis; terpenoid biosynthesis. Functionally, non-functional sesquiterpene synthase having less than 1% of the activity found in TPS5A. This chain is Inactive sesquithujene synthase B, found in Zea mays (Maize).